A 255-amino-acid chain; its full sequence is Glutamate racemase (255 aa).

Substrate is bound by residues 7–8 and 39–40; these read DS and YG. The Proton donor/acceptor role is filled by Cys70. 71-72 serves as a coordination point for substrate; sequence NT. The active-site Proton donor/acceptor is the Cys181. 182–183 lines the substrate pocket; that stretch reads TH.

The protein belongs to the aspartate/glutamate racemases family.

It carries out the reaction L-glutamate = D-glutamate. It participates in cell wall biogenesis; peptidoglycan biosynthesis. Its function is as follows. Provides the (R)-glutamate required for cell wall biosynthesis. The protein is Glutamate racemase of Helicobacter pylori (strain P12).